Here is a 156-residue protein sequence, read N- to C-terminus: Ribosomal RNA large subunit methyltransferase H (156 aa).

S-adenosyl-L-methionine-binding positions include Leu-73, Gly-104, and 123 to 128 (LSAMTL).

The protein belongs to the RNA methyltransferase RlmH family. In terms of assembly, homodimer.

The protein localises to the cytoplasm. The enzyme catalyses pseudouridine(1915) in 23S rRNA + S-adenosyl-L-methionine = N(3)-methylpseudouridine(1915) in 23S rRNA + S-adenosyl-L-homocysteine + H(+). Specifically methylates the pseudouridine at position 1915 (m3Psi1915) in 23S rRNA. This Laribacter hongkongensis (strain HLHK9) protein is Ribosomal RNA large subunit methyltransferase H.